Consider the following 139-residue polypeptide: Tol-Pal system protein TolR (139 aa).

The chain crosses the membrane as a helical span at residues 15–35; it reads IVPFLDVLLVLVLIFMATAPI.

Belongs to the ExbD/TolR family. The Tol-Pal system is composed of five core proteins: the inner membrane proteins TolA, TolQ and TolR, the periplasmic protein TolB and the outer membrane protein Pal. They form a network linking the inner and outer membranes and the peptidoglycan layer.

Its subcellular location is the cell inner membrane. Its function is as follows. Part of the Tol-Pal system, which plays a role in outer membrane invagination during cell division and is important for maintaining outer membrane integrity. This chain is Tol-Pal system protein TolR, found in Haemophilus influenzae (strain ATCC 51907 / DSM 11121 / KW20 / Rd).